The following is a 108-amino-acid chain: Glutaredoxin-1 (108 aa).

The Glutaredoxin domain occupies 3–106; that stretch reads EEFVQQRLAN…DILSSIGVLR (104 aa). A disulfide bridge links C23 with C26.

This sequence belongs to the glutaredoxin family.

It is found in the virion. Its function is as follows. Has thioltransferase and dehydroascorbate reductase activities. This Ectromelia virus (strain Moscow) (ECTV) protein is Glutaredoxin-1 (OPG075).